Consider the following 227-residue polypeptide: MGAVMGTFSSLQTKQRRPSKDIAWWYYQYQRDKIEDELEMTMVCHRPEGLEQLEAQTNFTKRELQVLYRGFKNECPSGVVNEETFKQIYAQFFPHGDASTYAHYLFNAFDTTQTGSVKFEDFVTALSILLRGTVHEKLRWTFNLYDINKDGYINKEEMMDIVKAIYDMMGKYTYPVLKEDTPRQHVDVFFQKMDKNKDGIVTLDEFLESCQEDDNIMRSLQLFQNVM.

The EF-hand 1; degenerate domain maps to 38-94 (LEMTMVCHRPEGLEQLEAQTNFTKRELQVLYRGFKNECPSGVVNEETFKQIYAQFFP). EF-hand domains are found at residues 97–132 (DASTYAHYLFNAFDTTQTGSVKFEDFVTALSILLRG), 133–168 (TVHEKLRWTFNLYDINKDGYINKEEMMDIVKAIYDM), and 181–216 (TPRQHVDVFFQKMDKNKDGIVTLDEFLESCQEDDNI). Ca(2+) is bound by residues aspartate 146, asparagine 148, aspartate 150, tyrosine 152, glutamate 157, aspartate 194, asparagine 196, aspartate 198, and glutamate 205. An interaction with KCND2 region spans residues 214–227 (DNIMRSLQLFQNVM).

Belongs to the recoverin family. As to quaternary structure, component of heteromultimeric potassium channels. Identified in potassium channel complexes containing KCND1, KCND2, KCND3, KCNIP1, KCNIP2, KCNIP3, KCNIP4, DPP6 and DPP10. Part of a heterooctamer composed of the tetrameric channel and four KCNIP1 chains. Probably part of a complex consisting of KCNIP1, KCNIP2 isoform 3 and KCND2. Self-associates to form homodimers and homotetramers. Interacts with KCNIP2 isoform 3 in a calcium-dependent manner. Interacts with KCND2; this interaction mediates the capture of both the N- and C-terminus of KCND2, thus preventing KCND2 N-type inactivation and modulates the channel gating kinetics. Interacts with KCND3; each KCNIP1 monomer interacts with two adjacent KCND3 subunits, through both the N-terminal inactivation ball of a KCND3 subunit and a C-terminal helix from the adjacent KCND3 subunit, clamping them together; this interaction stabilizes the tetrameric form and modulates the channel gating kinetics namely channel activation and inactivation kinetics and rate of recovery from inactivation. Expressed in brain. Found in a subpopulation of neurons widely distributed and enriched in Purkinje cells of the cerebellum and in the reticular thalamic and medial habenular nuclei.

It localises to the cell membrane. It is found in the cytoplasm. The protein resides in the cell projection. Its subcellular location is the dendrite. Its function is as follows. Regulatory subunit of Kv4/D (Shal)-type voltage-gated rapidly inactivating A-type potassium channels. Regulates channel density, inactivation kinetics and rate of recovery from inactivation in a calcium-dependent and isoform-specific manner. Modulates KCND2/Kv4.2 currents. In vitro, modulates KCND1/Kv4.1 currents. Increases the presence of KCND2 at the cell surface. This chain is A-type potassium channel modulatory protein KCNIP1, found in Mus musculus (Mouse).